Reading from the N-terminus, the 394-residue chain is 8-amino-7-oxononanoate synthase (394 aa).

Arg-18 serves as a coordination point for substrate. Residue 105–106 (GY) participates in pyridoxal 5'-phosphate binding. His-130 contacts substrate. The pyridoxal 5'-phosphate site is built by Ser-175, His-203, and Thr-232. An N6-(pyridoxal phosphate)lysine modification is found at Lys-235. Thr-349 is a binding site for substrate.

It belongs to the class-II pyridoxal-phosphate-dependent aminotransferase family. BioF subfamily. In terms of assembly, homodimer. The cofactor is pyridoxal 5'-phosphate.

The enzyme catalyses 6-carboxyhexanoyl-[ACP] + L-alanine + H(+) = (8S)-8-amino-7-oxononanoate + holo-[ACP] + CO2. Its pathway is cofactor biosynthesis; biotin biosynthesis. Its function is as follows. Catalyzes the decarboxylative condensation of pimeloyl-[acyl-carrier protein] and L-alanine to produce 8-amino-7-oxononanoate (AON), [acyl-carrier protein], and carbon dioxide. The polypeptide is 8-amino-7-oxononanoate synthase (Marinobacter nauticus (strain ATCC 700491 / DSM 11845 / VT8) (Marinobacter aquaeolei)).